Reading from the N-terminus, the 1120-residue chain is Transcription-repair-coupling factor (1120 aa).

The Helicase ATP-binding domain maps to 591–756 (DLSNGMLMDR…MTGLKELSII (166 aa)). Residue 604–611 (GDVGFGKT) coordinates ATP. Positions 709-712 (DEEQ) match the DEEQ box motif. The region spanning 777 to 931 (IIRDALLHEH…GFTIASHDMD (155 aa)) is the Helicase C-terminal domain.

This sequence in the N-terminal section; belongs to the UvrB family. It in the C-terminal section; belongs to the helicase family. RecG subfamily.

It is found in the cytoplasm. Couples transcription and DNA repair by recognizing RNA polymerase (RNAP) stalled at DNA lesions. Mediates ATP-dependent release of RNAP and its truncated transcript from the DNA, and recruitment of nucleotide excision repair machinery to the damaged site. This Rickettsia bellii (strain RML369-C) protein is Transcription-repair-coupling factor.